A 2254-amino-acid chain; its full sequence is Voltage-dependent T-type calcium channel subunit alpha-1G (2254 aa).

The interval 1-48 (MDEEEDGAGAEESGQPRSFTQLNDLSGAGGRQGPGSTEKDPGSADSEA) is disordered. Over 1 to 80 (MDEEEDGAGA…RSWCLRTVCN (80 aa)) the chain is Cytoplasmic. Residues 15–24 (QPRSFTQLND) are compositionally biased toward polar residues. One copy of the I repeat lies at 68–398 (SRPRSWCLRT…LCLVVIATQF (331 aa)). Residues 81–101 (PWFERVSMLVILLNCVTLGMF) traverse the membrane as a helical segment. Topologically, residues 102–119 (RPCEDIACDSQRCRILQA) are extracellular. The helical transmembrane segment at 120–141 (FDDFIFAFFAVEMVVKMVALGI) threads the bilayer. At 142–150 (FGKKCYLGD) the chain is on the cytoplasmic side. The helical transmembrane segment at 151–170 (TWNRLDFFIVIAGMLEYSLD) threads the bilayer. Residues 171–175 (LQNVS) lie on the Extracellular side of the membrane. Asn-173 carries N-linked (GlcNAc...) asparagine glycosylation. Residues 176–193 (FSAVRTVRVLRPLRAINR) form a helical membrane-spanning segment. Over 194-213 (VPSMRILVTLLLDTLPMLGN) the chain is Cytoplasmic. A helical transmembrane segment spans residues 214-234 (VLLLCFFVFFIFGIVGVQLWA). Residues 235 to 370 (GLLRNRCFLP…YFVMDAHSFY (136 aa)) lie on the Extracellular side of the membrane. N-linked (GlcNAc...) asparagine glycans are attached at residues Asn-246, Asn-306, Asn-310, and Asn-322. The helical transmembrane segment at 371 to 395 (NFIYFILLIIVGSFFMINLCLVVIA) threads the bilayer. Over 396-744 (TQFSETKQRE…DTFRKIVDSK (349 aa)) the chain is Cytoplasmic. The residue at position 467 (Ser-467) is a Phosphoserine. Residues 494 to 506 (LVHHHHHHHHHYH) show a composition bias toward basic residues. Disordered stretches follow at residues 494-513 (LVHHHHHHHHHYHLGNGTLR), 525-553 (DANGSRRLMLPPPSTPTPSGGPPRGAESV), 579-598 (ASGRTVGSGKVYPTVHTSPP), and 699-721 (DAQHSDLRDPHSRRRQRSLGPDA). Pro residues predominate over residues 534–545 (LPPPSTPTPSGG). The residue at position 716 (Ser-716) is a Phosphoserine. An II repeat occupies 730 to 968 (WRLICDTFRK…LLVAILVEGF (239 aa)). A helical transmembrane segment spans residues 745–765 (YFGRGIMIAILVNTLSMGIEY). Over 766-778 (HEQPEELTNALEI) the chain is Extracellular. Residues 779 to 800 (SNIVFTSLFALEMLLKLLVYGP) form a helical membrane-spanning segment. The Cytoplasmic segment spans residues 801–806 (FGYIKN). The helical transmembrane segment at 807–825 (PYNIFDGVIVVISVWEIVG) threads the bilayer. The Extracellular segment spans residues 826-833 (QQGGGLSV). Residues 834–857 (LRTFRLMRVLKLVRFLPALQRQLV) form a helical membrane-spanning segment. Residues 858-868 (VLMKTMDNVAT) lie on the Cytoplasmic side of the membrane. Residues 869-889 (FCMLLMLFIFIFSILGMHLFG) traverse the membrane as a helical segment. Topologically, residues 890 to 940 (CKFASERDGDTLPDRKNFDSLLWAIVTVFQILTQEDWNKVLYNGMASTSSW) are extracellular. Residues 941-965 (AALYFIALMTFGNYVLFNLLVAILV) traverse the membrane as a helical segment. Topologically, residues 966–1251 (EGFQAEGDAT…SRFRLLCHRI (286 aa)) are cytoplasmic. Positions 1024 to 1209 (TPMSHPKSSS…GDDDNDEGNL (186 aa)) are disordered. Composition is skewed to low complexity over residues 1041-1052 (GSGSRRTSSSGS) and 1065-1091 (PPSARSSPHSPWSAASSWTSRRSSRNS). 2 stretches are compositionally biased toward acidic residues: residues 1117–1126 (ESQDEEESSE) and 1196–1206 (PQLDGDDDNDE). A phosphoserine mark is found at Ser-1118, Ser-1124, and Ser-1125. The III repeat unit spans residues 1242–1519 (SRFRLLCHRI…MFVGVVVENF (278 aa)). The chain crosses the membrane as a helical span at residues 1252–1274 (ITHKMFDHVVLVIIFLNCITIAM). Over 1275 to 1292 (ERPKIDPHSAERIFLTLS) the chain is Extracellular. The helical transmembrane segment at 1293–1313 (NYIFTAVFLAEMTVKVVALGW) threads the bilayer. The Cytoplasmic portion of the chain corresponds to 1314–1323 (CFGEQAYLRS). A helical transmembrane segment spans residues 1324-1343 (SWNVLDGLLVLISVIDILVS). Over 1344 to 1357 (MVSDSGTKILGMLR) the chain is Extracellular. The helical transmembrane segment at 1358 to 1379 (VLRLLRTLRPLRVISRAQGLKL) threads the bilayer. Topologically, residues 1380–1389 (VVETLMSSLK) are cytoplasmic. The helical transmembrane segment at 1390-1413 (PIGNIVVICCAFFIIFGILGVQLF) threads the bilayer. The Extracellular segment spans residues 1414–1490 (KGKFFVCQGE…DQQPIMNHNP (77 aa)). N-linked (GlcNAc...) asparagine glycans are attached at residues Asn-1427 and Asn-1430. A helical membrane pass occupies residues 1491 to 1516 (WMLLYFISFLLIVAFFVLNMFVGVVV). At 1517-1578 (ENFHKCRQHQ…RLLVHHLCTS (62 aa)) the chain is on the cytoplasmic side. An IV repeat occupies 1564-1822 (DYSRFRLLVH…VVIAVLMKHL (259 aa)). Residues 1579–1599 (HYLDLFITGVIGLNVVTMAME) traverse the membrane as a helical segment. The Extracellular segment spans residues 1600–1613 (HYQQPQILDEALKI). A helical transmembrane segment spans residues 1614-1635 (CNYIFTVIFVFESVFKLVAFGF). The Cytoplasmic segment spans residues 1636–1642 (RRFFQDR). A helical transmembrane segment spans residues 1643 to 1661 (WNQLDLAIVLLSIMGITLE). Residues 1662-1675 (EIEVNLSLPINPTI) are Extracellular-facing. A glycan (N-linked (GlcNAc...) asparagine) is linked at Asn-1666. A helical transmembrane segment spans residues 1676 to 1699 (IRIMRVLRIARVLKLLKMAVGMRA). Topologically, residues 1700–1713 (LLHTVMQALPQVGN) are cytoplasmic. The chain crosses the membrane as a helical span at residues 1714–1734 (LGLLFMLLFFIFAALGVELFG). Residues 1735–1794 (DLECDETHPCEGLGRHATFRNFGMAFLTLFRVSTGDNWNGIMKDTLRDCDQESTCYNTVI) lie on the Extracellular side of the membrane. Residues 1795-1822 (SPIYFVSFVLTAQFVLVNVVIAVLMKHL) traverse the membrane as a helical segment. Residues 1823 to 2254 (EESNKEAKEE…LSSDPTDMDP (432 aa)) are Cytoplasmic-facing. The segment at 2153–2254 (DSGSQPRLCP…LSSDPTDMDP (102 aa)) is disordered. Over residues 2184 to 2193 (SPPSISIDPP) the composition is skewed to low complexity. Polar residues-rich tracts occupy residues 2220–2232 (PSVSSPLDSTAAS) and 2240–2254 (LSLSGLSSDPTDMDP).

It belongs to the calcium channel alpha-1 subunit (TC 1.A.1.11) family. CACNA1G subfamily. In response to raising of intracellular calcium, the T-type channels are activated by CaM-kinase II. As to expression, highly expressed in brain. Moderate expression in heart; low expression in placenta, kidney and lung.

It localises to the cell membrane. The protein resides in the cytoplasm. The catalysed reaction is Ca(2+)(in) = Ca(2+)(out). Its function is as follows. Voltage-sensitive calcium channels (VSCC) mediate the entry of calcium ions into excitable cells and are also involved in a variety of calcium-dependent processes, including muscle contraction, hormone or neurotransmitter release, gene expression, cell motility, cell division and cell death. The isoform alpha-1G gives rise to T-type calcium currents. T-type calcium channels belong to the 'low-voltage activated (LVA)' group and are strongly blocked by nickel and mibefradil. A particularity of this type of channels is an opening at quite negative potentials and a voltage-dependent inactivation. T-type channels serve pacemaking functions in both central neurons and cardiac nodal cells and support calcium signaling in secretory cells and vascular smooth muscle. They may also be involved in the modulation of firing patterns of neurons which is important for information processing as well as in cell growth processes. In Rattus norvegicus (Rat), this protein is Voltage-dependent T-type calcium channel subunit alpha-1G (Cacna1g).